Reading from the N-terminus, the 371-residue chain is Carnitine monooxygenase oxygenase subunit (371 aa).

One can recognise a Rieske domain in the interval 44–152 (WICVAHGSEL…VEEYAGFVFI (109 aa)). [2Fe-2S] cluster contacts are provided by Cys86, His88, Cys106, and His109. Residues His208, His213, and Asp323 each contribute to the Fe cation site.

Belongs to the bacterial ring-hydroxylating dioxygenase alpha subunit family. CntA subfamily. In terms of assembly, composed of an oxygenase subunit and a reductase subunit. Requires [2Fe-2S] cluster as cofactor. The cofactor is Fe cation.

It carries out the reaction (R)-carnitine + NADH + O2 + H(+) = (3R)-3-hydroxy-4-oxobutanoate + trimethylamine + NAD(+) + H2O. It catalyses the reaction (R)-carnitine + NADPH + O2 + H(+) = (3R)-3-hydroxy-4-oxobutanoate + trimethylamine + NADP(+) + H2O. The protein operates within amine and polyamine metabolism; carnitine metabolism. Its activity is regulated as follows. Inhibited by EDTA. Its function is as follows. Converts carnitine to trimethylamine and malic semialdehyde. Acts on both enantiomers. The sequence is that of Carnitine monooxygenase oxygenase subunit from Acinetobacter pittii (strain PHEA-2).